The following is a 193-amino-acid chain: dCTP deaminase (193 aa).

DCTP-binding positions include 110–115 (RSSLAR), Asp-128, 136–138 (VLE), Tyr-171, Lys-178, and Gln-182. Glu-138 serves as the catalytic Proton donor/acceptor.

Belongs to the dCTP deaminase family. Homotrimer.

It carries out the reaction dCTP + H2O + H(+) = dUTP + NH4(+). It functions in the pathway pyrimidine metabolism; dUMP biosynthesis; dUMP from dCTP (dUTP route): step 1/2. Its function is as follows. Catalyzes the deamination of dCTP to dUTP. This is dCTP deaminase from Tolumonas auensis (strain DSM 9187 / NBRC 110442 / TA 4).